The primary structure comprises 295 residues: Protoheme IX farnesyltransferase (295 aa).

9 helical membrane passes run 27 to 47 (IMYLVVLTGITGMIIAPGNIH), 48 to 68 (PFIGIISTLCIALGSGAAGAI), 93 to 115 (IARSTAIELGLVLSVISVTVMMI), 119 to 136 (YLSGILLAISIGFYSLVY), 147 to 167 (NIVIGGIAGALPPIIGWTSVT), 175 to 195 (LILFLIIFVWTPPHFWALSLL), 219 to 239 (IYILVYSIILFIITLLPGIFL), 247 to 267 (TCAIPLGMTFVFHAFKVFVSI), and 275 to 295 (MFTYSIAYLFILFICIIISSF).

The protein belongs to the UbiA prenyltransferase family. Protoheme IX farnesyltransferase subfamily.

The protein resides in the cell inner membrane. The enzyme catalyses heme b + (2E,6E)-farnesyl diphosphate + H2O = Fe(II)-heme o + diphosphate. It participates in porphyrin-containing compound metabolism; heme O biosynthesis; heme O from protoheme: step 1/1. Functionally, converts heme B (protoheme IX) to heme O by substitution of the vinyl group on carbon 2 of heme B porphyrin ring with a hydroxyethyl farnesyl side group. The protein is Protoheme IX farnesyltransferase of Ehrlichia chaffeensis (strain ATCC CRL-10679 / Arkansas).